The chain runs to 274 residues: Hydroxyethylthiazole kinase (274 aa).

Met-49 is a binding site for substrate. ATP-binding residues include Arg-125 and Thr-173. Gly-200 is a substrate binding site.

This sequence belongs to the Thz kinase family. Mg(2+) is required as a cofactor.

The catalysed reaction is 5-(2-hydroxyethyl)-4-methylthiazole + ATP = 4-methyl-5-(2-phosphooxyethyl)-thiazole + ADP + H(+). It participates in cofactor biosynthesis; thiamine diphosphate biosynthesis; 4-methyl-5-(2-phosphoethyl)-thiazole from 5-(2-hydroxyethyl)-4-methylthiazole: step 1/1. Functionally, catalyzes the phosphorylation of the hydroxyl group of 4-methyl-5-beta-hydroxyethylthiazole (THZ). This Desulfosudis oleivorans (strain DSM 6200 / JCM 39069 / Hxd3) (Desulfococcus oleovorans) protein is Hydroxyethylthiazole kinase.